A 181-amino-acid chain; its full sequence is Small ribosomal subunit protein uS4 (181 aa).

The S4 RNA-binding domain occupies 106–168; sequence RRLQTLVYRK…PTSRIVKAKV (63 aa).

The protein belongs to the universal ribosomal protein uS4 family. In terms of assembly, part of the 30S ribosomal subunit. Contacts protein S5. The interaction surface between S4 and S5 is involved in control of translational fidelity.

One of the primary rRNA binding proteins, it binds directly to 16S rRNA where it nucleates assembly of the body of the 30S subunit. In terms of biological role, with S5 and S12 plays an important role in translational accuracy. The protein is Small ribosomal subunit protein uS4 of Caldivirga maquilingensis (strain ATCC 700844 / DSM 13496 / JCM 10307 / IC-167).